The following is a 25-amino-acid chain: Caerin-1.4 (25 aa).

Leu-25 bears the Leucine amide mark.

It belongs to the frog skin active peptide (FSAP) family. Caerin subfamily. In terms of tissue distribution, expressed by the skin parotoid and/or rostral glands.

The protein localises to the secreted. Antibacterial peptide, that adopts an alpha helical conformation which can disrupt bacterial membranes. Each caerin displays a different antimicrobial specificity. The polypeptide is Caerin-1.4 (Ranoidea caerulea (Green tree frog)).